A 393-amino-acid polypeptide reads, in one-letter code: CCCH-type zinc finger protein oma-2 (393 aa).

Residues 1–26 (MDMLKENVIQNNEARTESSVEPSHPD) are disordered. The span at 14-26 (ARTESSVEPSHPD) shows a compositional bias: basic and acidic residues. 2 consecutive C3H1-type zinc fingers follow at residues 105–133 (SYKT…HGEE) and 147–175 (KYRT…HPDN). 2 disordered regions span residues 227–251 (TPDE…RYEL) and 311–340 (KQST…LTAA). Positions 313–340 (STPGGVSGYSSSGSTPSQDSDSSPLTAA) are enriched in low complexity. The residue at position 327 (Thr327) is a Phosphothreonine; by GSK3.

In terms of tissue distribution, exclusively expressed in the hermaphrodite gonad. Expression only in cellulized oocytes. Widely distributed throughout gonadal oocytes from the mitotic stage to the developing diakinesis stage.

The protein resides in the cytoplasm. It is found in the cytoplasmic granule. Its subcellular location is the cytoskeleton. It localises to the microtubule organizing center. The protein localises to the centrosome. Zinc-finger RNA-binding protein that binds to 5'-UA[AU]-3' motifs in the 3'-UTR of maternal mRNAs to suppress translation in oocytes and embryos. Acts redundantly with oma-1 to control the temporal expression and distribution of maternal proteins and thereby promote meiotic progression, oocyte maturation, fertilization and embryonic development. Also, together with oma-1, is involved in P-granule distribution during embryonic development. This chain is CCCH-type zinc finger protein oma-2, found in Caenorhabditis elegans.